The sequence spans 305 residues: Flavin-dependent thymidylate synthase (305 aa).

The ThyX domain maps to 50-261; it reads GFVRLIDYLG…PCATASFENH (212 aa). Residues serine 96, 119–121, and glutamate 127 contribute to the FAD site; that span reads RHR. Residues 116 to 119, 127 to 131, and arginine 200 contribute to the dUMP site; these read QWMR and EVSSR. The ThyX motif motif lies at 119-129; that stretch reads RHRTARISEVS. FAD is bound by residues 216–218 and histidine 222; that span reads DLH. Arginine 227 provides a ligand contact to dUMP. Arginine 227 acts as the Involved in ionization of N3 of dUMP, leading to its activation in catalysis.

This sequence belongs to the thymidylate synthase ThyX family. Homotetramer. It depends on FAD as a cofactor.

The catalysed reaction is dUMP + (6R)-5,10-methylene-5,6,7,8-tetrahydrofolate + NADPH + H(+) = dTMP + (6S)-5,6,7,8-tetrahydrofolate + NADP(+). The protein operates within pyrimidine metabolism; dTTP biosynthesis. Catalyzes the reductive methylation of 2'-deoxyuridine-5'-monophosphate (dUMP) to 2'-deoxythymidine-5'-monophosphate (dTMP) while utilizing 5,10-methylenetetrahydrofolate (mTHF) as the methyl donor, and NADPH and FADH(2) as the reductant. The chain is Flavin-dependent thymidylate synthase from Treponema pallidum (strain Nichols).